Reading from the N-terminus, the 77-residue chain is MAVDVPTSVIVKLMFFTLAMVSFPVLTFFVSQQYTSNTLVNGGLAALAANVVLFAYVIMAFSEDVPQSDGKESKKQQ.

The Cytoplasmic segment spans residues 1-8 (MAVDVPTS). The helical transmembrane segment at 9 to 29 (VIVKLMFFTLAMVSFPVLTFF) threads the bilayer. The Lumenal portion of the chain corresponds to 30–41 (VSQQYTSNTLVN). Residues 42 to 62 (GGLAALAANVVLFAYVIMAFS) traverse the membrane as a helical segment. At 63–77 (EDVPQSDGKESKKQQ) the chain is on the cytoplasmic side. A Prevents secretion from ER motif is present at residues 74–77 (KKQQ).

This sequence belongs to the VMA21 family.

It localises to the endoplasmic reticulum membrane. The protein resides in the endoplasmic reticulum-Golgi intermediate compartment membrane. It is found in the cytoplasmic vesicle. Its subcellular location is the COPII-coated vesicle membrane. Its function is as follows. Required for the assembly of the V0 complex of the vacuolar ATPase (V-ATPase) in the endoplasmic reticulum. This Eremothecium gossypii (strain ATCC 10895 / CBS 109.51 / FGSC 9923 / NRRL Y-1056) (Yeast) protein is Vacuolar ATPase assembly integral membrane protein VMA21.